The chain runs to 354 residues: Putrescine/cadaverine-binding protein (354 aa).

A signal peptide spans 1-20; it reads MMKKLLLVATLMAGAAQATA.

It belongs to the bacterial solute-binding protein 1 family.

It is found in the periplasm. Binds putrescine and cadaverine. This is Putrescine/cadaverine-binding protein from Pseudomonas aeruginosa (strain ATCC 15692 / DSM 22644 / CIP 104116 / JCM 14847 / LMG 12228 / 1C / PRS 101 / PAO1).